The sequence spans 481 residues: Tetratricopeptide repeat protein 29 (481 aa).

Low complexity predominate over residues 1 to 18 (MASVGPVKTKTVTLKELT). Residues 1 to 53 (MASVGPVKTKTVTLKELTPPIPSPEKSACKGAKPDSNHMALVPVKPSQPGSGK) are disordered. 6 TPR repeats span residues 191-224 (CERC…AMES), 231-264 (QEVR…AMAL), 271-310 (VEAN…SQRV), 317-350 (ADSL…ARAA), 357-390 (KRAS…SEKA), and 397-430 (YRAT…ARKL).

In terms of assembly, interacts with TAX-1.

The protein localises to the cytoplasm. Its subcellular location is the cytoskeleton. The protein resides in the flagellum axoneme. Axonemal protein which is implicated in axonemal and/or peri-axonemal structure assembly and regulates flagellum assembly and beating. This Trypanosoma brucei brucei (strain 927/4 GUTat10.1) protein is Tetratricopeptide repeat protein 29.